The primary structure comprises 227 residues: Arginine ABC transporter permease protein ArtM (227 aa).

In terms of domain architecture, ABC transmembrane type-1 spans 13–209 (IPTSLLLTVV…IITGIATLLL (197 aa)). The next 5 membrane-spanning stretches (helical) occupy residues 17 to 37 (LLLTVVSLLIAFFLALFLTFL), 51 to 71 (LYLTLFTGTPLLVQFFLIYAG), 78 to 98 (IIDSPLWYVLSNAWFCAALAL), 155 to 175 (IILVFKGTALASTITIMDIMG), and 188 to 208 (LTIYGIAGGIYLIITGIATLL).

The protein belongs to the binding-protein-dependent transport system permease family. HisMQ subfamily. In terms of assembly, the complex is composed of two ATP-binding proteins (ArtP), two transmembrane proteins (ArtM and ArtQ) and a solute-binding protein (ArtI).

It localises to the cell inner membrane. Its function is as follows. Part of the ABC transporter complex ArtPIQM involved in arginine transport. Probably responsible for the translocation of the substrate across the membrane. This chain is Arginine ABC transporter permease protein ArtM (artM), found in Haemophilus influenzae (strain ATCC 51907 / DSM 11121 / KW20 / Rd).